A 434-amino-acid chain; its full sequence is GTPase Obg (434 aa).

Positions 2 to 160 (PTFVDQTKIE…RVLRLELKLL (159 aa)) constitute an Obg domain. One can recognise an OBG-type G domain in the interval 161-334 (ADVGLVGFPS…LMNDTATLVE (174 aa)). GTP-binding positions include 167-174 (GFPSVGKS), 192-196 (FTTLT), 214-217 (DLPG), 284-287 (SQMD), and 315-317 (SSV). Residues serine 174 and threonine 194 each coordinate Mg(2+). Residues 356–434 (YKAPQKNEFT…IGKFVFEFVQ (79 aa)) form the OCT domain.

The protein belongs to the TRAFAC class OBG-HflX-like GTPase superfamily. OBG GTPase family. As to quaternary structure, monomer. The cofactor is Mg(2+).

It is found in the cytoplasm. In terms of biological role, an essential GTPase which binds GTP, GDP and possibly (p)ppGpp with moderate affinity, with high nucleotide exchange rates and a fairly low GTP hydrolysis rate. Plays a role in control of the cell cycle, stress response, ribosome biogenesis and in those bacteria that undergo differentiation, in morphogenesis control. The protein is GTPase Obg of Lactobacillus helveticus (strain DPC 4571).